We begin with the raw amino-acid sequence, 122 residues long: Large ribosomal subunit protein bL12 (122 aa).

This sequence belongs to the bacterial ribosomal protein bL12 family. As to quaternary structure, homodimer. Part of the ribosomal stalk of the 50S ribosomal subunit. Forms a multimeric L10(L12)X complex, where L10 forms an elongated spine to which 2 to 4 L12 dimers bind in a sequential fashion. Binds GTP-bound translation factors.

Forms part of the ribosomal stalk which helps the ribosome interact with GTP-bound translation factors. Is thus essential for accurate translation. The sequence is that of Large ribosomal subunit protein bL12 from Mycoplasma genitalium (strain ATCC 33530 / DSM 19775 / NCTC 10195 / G37) (Mycoplasmoides genitalium).